Here is a 176-residue protein sequence, read N- to C-terminus: Large ribosomal subunit protein uL22 (176 aa).

Residues 113 to 176 (VVESRPSKDQ…ETSEAKGGSD (64 aa)) form a disordered region. The span at 136–152 (SKAAATAPAKKSSASKA) shows a compositional bias: low complexity. Positions 159–176 (TKAESKTSETSEAKGGSD) are enriched in basic and acidic residues.

Belongs to the universal ribosomal protein uL22 family. In terms of assembly, part of the 50S ribosomal subunit.

Functionally, this protein binds specifically to 23S rRNA; its binding is stimulated by other ribosomal proteins, e.g. L4, L17, and L20. It is important during the early stages of 50S assembly. It makes multiple contacts with different domains of the 23S rRNA in the assembled 50S subunit and ribosome. In terms of biological role, the globular domain of the protein is located near the polypeptide exit tunnel on the outside of the subunit, while an extended beta-hairpin is found that lines the wall of the exit tunnel in the center of the 70S ribosome. The polypeptide is Large ribosomal subunit protein uL22 (Mycobacterium marinum (strain ATCC BAA-535 / M)).